We begin with the raw amino-acid sequence, 421 residues long: Synaptotagmin-1 (421 aa).

Topologically, residues 1-57 are vesicular; the sequence is MVSASHPEALAAPVTTVATLVPHNATEPASPGEGKEDAFSKLKQKFMNELHKIPLPP. Residue Asn24 is glycosylated (N-linked (GlcNAc...) asparagine). Residues 58 to 79 form a helical membrane-spanning segment; it reads WALIAIAIVAVLLVVTCCFCVC. Residues Cys74, Cys75, Cys77, Cys79, and Cys82 are each lipidated (S-palmitoyl cysteine). Residues 80–421 lie on the Cytoplasmic side of the membrane; it reads KKCLFKKKNK…EVDAMLAVKK (342 aa). The interval 112 to 141 is disordered; the sequence is TMKDQALKDDDAETGLTDGEEKEEPKEEEK. Residues 121-133 show a composition bias toward acidic residues; the sequence is DDAETGLTDGEEK. Thr128 is modified (phosphothreonine). The segment at 135 to 381 is phospholipid binding; sequence EPKEEEKLGK…AIGKVFVGYN (247 aa). Residues 141 to 260 form the C2 1 domain; the sequence is KLGKLQYSLD…DFGHVTEEWR (120 aa). Positions 171, 172, and 178 each coordinate Ca(2+). A Phosphotyrosine modification is found at Tyr229. Ca(2+)-binding residues include Asp230, Phe231, Asp232, Ser235, Lys236, and Asp238. Ser264 is modified (phosphoserine). Residues 272–405 enclose the C2 2 domain; it reads KLGDICFSLR…NPRRPIAQWH (134 aa). Residues Asp303 and Asp309 each contribute to the Ca(2+) site. Residues Ser342 and Ser344 each carry the phosphoserine modification. 3 residues coordinate Ca(2+): Asp363, Asp365, and Asp371.

It belongs to the synaptotagmin family. As to quaternary structure, homotetramer. Heterodimer; heterodimerizes with SYT2 in presence of calcium. Interacts with SCAMP5. Interacts with STON2. Forms a complex with SV2B, syntaxin 1 and SNAP25. Interacts with SV2A, SV2B and SV2C. Interacts with RIMS1. Interacts with PRRT2. Interacts with DNAJC5 in a phosphorylation-dependent manner. Interacts (via N-terminus) with RAB3A. Interacts with SYT12. Interacts with calmodulin. Interacts with DNM1 (via C-terminal proline-rich domain (PRD)); this interaction facilitates vesicle fission during clathrin-mediated endocytosis (CME). In terms of assembly, (Microbial infection) Interacts with C.botulinum neurotoxin type B (BoNT/B, botB). Has lower affinity for BoNT/B than Syt2; mutating its residues to match those in Syt2 increases its affinity. (Microbial infection) Interacts with C.botulinum neurotoxin type G (BoNT/G, botG). Ca(2+) is required as a cofactor. In terms of processing, glycosylated. As to expression, expressed in the brain (at protein level). Predominantly expressed in rostral, phylogenetically younger brain regions, and in some endocrine tissues.

It localises to the cytoplasmic vesicle. The protein resides in the secretory vesicle membrane. It is found in the secretory vesicle. Its subcellular location is the synaptic vesicle membrane. The protein localises to the chromaffin granule membrane. It localises to the cytoplasm. Calcium sensor that participates in triggering neurotransmitter release at the synapse. May have a regulatory role in the membrane interactions during trafficking of synaptic vesicles at the active zone of the synapse. It binds acidic phospholipids with a specificity that requires the presence of both an acidic head group and a diacyl backbone. A Ca(2+)-dependent interaction between synaptotagmin and putative receptors for activated protein kinase C has also been reported. It can bind to at least three additional proteins in a Ca(2+)-independent manner; these are neurexins, syntaxin and AP2. Plays a role in dendrite formation by melanocytes. In terms of biological role, (Microbial infection) Receptor for C.botulinum neurotoxin type B (BoNT/B, botB); interaction is improved in the presence of gangliosides. BoNT/B toxin binds to the membrane proximal vesicular domain of Syt1 (residues 32-51). Its function is as follows. (Microbial infection) Receptor for C.botulinum neurotoxin type G (BoNT/G, botG); unlike the case with BoNT/B, interaction is not improved in the presence of gangliosides. BoNT/G toxin binds to the vesicular domain of Syt1 (residues 32-53). This Rattus norvegicus (Rat) protein is Synaptotagmin-1.